Here is a 334-residue protein sequence, read N- to C-terminus: Holliday junction branch migration complex subunit RuvB (334 aa).

Residues 1 to 182 (MDERLVSSEA…FGVMSRLEYY (182 aa)) form a large ATPase domain (RuvB-L) region. ATP contacts are provided by residues Leu21, Arg22, Gly63, Lys66, Thr67, Thr68, 129–131 (EDF), Arg172, Tyr182, and Arg219. Thr67 provides a ligand contact to Mg(2+). A small ATPAse domain (RuvB-S) region spans residues 183–253 (TQEELADIVT…ISQNALERLQ (71 aa)). Residues 256–334 (RLGLDHIDHK…HFQMEAPRYD (79 aa)) are head domain (RuvB-H). Residues Arg311 and Arg316 each contribute to the DNA site.

Belongs to the RuvB family. In terms of assembly, homohexamer. Forms an RuvA(8)-RuvB(12)-Holliday junction (HJ) complex. HJ DNA is sandwiched between 2 RuvA tetramers; dsDNA enters through RuvA and exits via RuvB. An RuvB hexamer assembles on each DNA strand where it exits the tetramer. Each RuvB hexamer is contacted by two RuvA subunits (via domain III) on 2 adjacent RuvB subunits; this complex drives branch migration. In the full resolvosome a probable DNA-RuvA(4)-RuvB(12)-RuvC(2) complex forms which resolves the HJ. Homohexamer which interacts with RecU.

It is found in the cytoplasm. The catalysed reaction is ATP + H2O = ADP + phosphate + H(+). The RuvA-RuvB-RuvC complex processes Holliday junction (HJ) DNA during genetic recombination and DNA repair, while the RuvA-RuvB complex plays an important role in the rescue of blocked DNA replication forks via replication fork reversal (RFR). RuvA specifically binds to HJ cruciform DNA, conferring on it an open structure. The RuvB hexamer acts as an ATP-dependent pump, pulling dsDNA into and through the RuvAB complex. RuvB forms 2 homohexamers on either side of HJ DNA bound by 1 or 2 RuvA tetramers; 4 subunits per hexamer contact DNA at a time. Coordinated motions by a converter formed by DNA-disengaged RuvB subunits stimulates ATP hydrolysis and nucleotide exchange. Immobilization of the converter enables RuvB to convert the ATP-contained energy into a lever motion, pulling 2 nucleotides of DNA out of the RuvA tetramer per ATP hydrolyzed, thus driving DNA branch migration. The RuvB motors rotate together with the DNA substrate, which together with the progressing nucleotide cycle form the mechanistic basis for DNA recombination by continuous HJ branch migration. Branch migration allows RuvC to scan DNA until it finds its consensus sequence, where it cleaves and resolves cruciform DNA. This is Holliday junction branch migration complex subunit RuvB from Bacillus subtilis (strain 168).